The chain runs to 407 residues: Putative cell wall shaping protein YabE (407 aa).

The N-terminal stretch at 1–31 (MKKLFSVKLSKSKVILVAACLLLAGSGTAYA) is a signal peptide. The 81-residue stretch at 206–286 (ITRIEKVTDV…DKVIAVGTKQ (81 aa)) folds into the G5 domain.

Functionally, suggested to be involved in cell wall modification. In Bacillus subtilis (strain 168), this protein is Putative cell wall shaping protein YabE (yabE).